A 142-amino-acid chain; its full sequence is Large ribosomal subunit protein uL13 (142 aa).

Belongs to the universal ribosomal protein uL13 family. Part of the 50S ribosomal subunit.

In terms of biological role, this protein is one of the early assembly proteins of the 50S ribosomal subunit, although it is not seen to bind rRNA by itself. It is important during the early stages of 50S assembly. The polypeptide is Large ribosomal subunit protein uL13 (Haemophilus influenzae (strain 86-028NP)).